The primary structure comprises 404 residues: Probable ribosomal oxygenase HI_0396 (404 aa).

The JmjC domain occupies 102-231; the sequence is ELGQLWNKFG…LIDGISKGFC (130 aa). Residues histidine 135, aspartate 137, and histidine 199 each coordinate Fe cation.

This sequence belongs to the ROX family. Fe(2+) is required as a cofactor.

Functionally, oxygenase that catalyzes the hydroxylation of a ribosomal protein. The protein is Probable ribosomal oxygenase HI_0396 of Haemophilus influenzae (strain ATCC 51907 / DSM 11121 / KW20 / Rd).